A 285-amino-acid chain; its full sequence is Probable endonuclease 4 (285 aa).

Zn(2+)-binding residues include His-69, His-109, Glu-145, Asp-179, His-182, His-216, Asp-229, His-231, and Glu-261.

Belongs to the AP endonuclease 2 family. The cofactor is Zn(2+).

It catalyses the reaction Endonucleolytic cleavage to 5'-phosphooligonucleotide end-products.. In terms of biological role, endonuclease IV plays a role in DNA repair. It cleaves phosphodiester bonds at apurinic or apyrimidinic (AP) sites, generating a 3'-hydroxyl group and a 5'-terminal sugar phosphate. This Salmonella schwarzengrund (strain CVM19633) protein is Probable endonuclease 4.